Consider the following 137-residue polypeptide: ATP synthase epsilon chain (137 aa).

It belongs to the ATPase epsilon chain family. As to quaternary structure, F-type ATPases have 2 components, CF(1) - the catalytic core - and CF(0) - the membrane proton channel. CF(1) has five subunits: alpha(3), beta(3), gamma(1), delta(1), epsilon(1). CF(0) has three main subunits: a, b and c.

The protein localises to the cell inner membrane. Functionally, produces ATP from ADP in the presence of a proton gradient across the membrane. This chain is ATP synthase epsilon chain, found in Magnetococcus marinus (strain ATCC BAA-1437 / JCM 17883 / MC-1).